Reading from the N-terminus, the 424-residue chain is Anaerobic glycerol-3-phosphate dehydrogenase subunit B (424 aa).

This sequence belongs to the anaerobic G-3-P dehydrogenase subunit B family. In terms of assembly, composed of a catalytic GlpA/B dimer and of membrane bound GlpC. It depends on FMN as a cofactor.

It catalyses the reaction a quinone + sn-glycerol 3-phosphate = dihydroxyacetone phosphate + a quinol. Its pathway is polyol metabolism; glycerol degradation via glycerol kinase pathway; glycerone phosphate from sn-glycerol 3-phosphate (anaerobic route): step 1/1. Functionally, conversion of glycerol 3-phosphate to dihydroxyacetone. Uses fumarate or nitrate as electron acceptor. This Yersinia enterocolitica serotype O:8 / biotype 1B (strain NCTC 13174 / 8081) protein is Anaerobic glycerol-3-phosphate dehydrogenase subunit B.